The primary structure comprises 922 residues: Neuropilin-1 (922 aa).

An N-terminal signal peptide occupies residues 1-21; that stretch reads MERGLPLLCATLALALALAGA. The Extracellular portion of the chain corresponds to 22 to 855; that stretch reads FRSDKCGGTI…PGNVLKTLDP (834 aa). 3 disulfides stabilise this stretch: Cys-27–Cys-54, Cys-82–Cys-104, and Cys-147–Cys-173. CUB domains follow at residues 27-141 and 147-265; these read CGGT…YEIF and CSQN…YSVL. The N-linked (GlcNAc...) asparagine glycan is linked to Asn-150. The Ca(2+) site is built by Glu-195, Asp-209, and Asp-250. Cys-206 and Cys-228 are oxidised to a cystine. Residues Asn-261, Asn-300, and Asn-522 are each glycosylated (N-linked (GlcNAc...) asparagine). Disulfide bonds link Cys-275–Cys-424 and Cys-431–Cys-583. F5/8 type C domains lie at 275–424 and 431–583; these read CMEA…VYGC and CSGM…LLGC. Residue Ser-612 is glycosylated (O-linked (Xyl...) (chondroitin sulfate) serine; alternate). O-linked (Xyl...) (heparan sulfate) serine; alternate glycosylation is present at Ser-612. The MAM domain occupies 645–811; it reads TYGFNCEFGW…NHIPQEDCAK (167 aa). O-linked (Xyl...) (chondroitin sulfate) serine glycosylation is present at Ser-829. The N-linked (GlcNAc...) asparagine glycan is linked to Asn-841. The chain crosses the membrane as a helical span at residues 856-880; that stretch reads ILITIIAMSALGVLLGAVCGVVLYC. The Cytoplasmic segment spans residues 881–922; it reads ACWHNGMSERNLSALENYNFELVDGVKLKKDKLNPQSNYSEA. Ser-893 carries the post-translational modification Phosphoserine.

It belongs to the neuropilin family. In terms of assembly, homodimer, and heterodimer with NRP2. Binds PLXNB1. Interacts with FER. Interacts with VEGFA. Interacts with ABCB8/MITOSUR in mitochondria. Found in the embryonic nervous system. Expressed in dorsal root ganglia.

It localises to the mitochondrion membrane. It is found in the cell membrane. Its subcellular location is the cytoplasm. In terms of biological role, cell-surface receptor involved in the development of the cardiovascular system, in angiogenesis, in the formation of certain neuronal circuits and in organogenesis outside the nervous system. Mediates the chemorepulsant activity of semaphorins. Recognizes a C-end rule (CendR) motif R/KXXR/K on its ligands which causes cellular internalization and vascular leakage. It binds to semaphorin 3A, the PLGF-2 isoform of PGF, the VEGF165 isoform of VEGFA and VEGFB. Coexpression with KDR results in increased VEGF165 binding to KDR as well as increased chemotaxis. Regulates VEGF-induced angiogenesis. Binding to VEGFA initiates a signaling pathway needed for motor neuron axon guidance and cell body migration, including for the caudal migration of facial motor neurons from rhombomere 4 to rhombomere 6 during embryonic development. Regulates mitochondrial iron transport via interaction with ABCB8/MITOSUR. This is Neuropilin-1 (Nrp1) from Rattus norvegicus (Rat).